Consider the following 182-residue polypeptide: Adenine phosphoribosyltransferase (182 aa).

The protein belongs to the purine/pyrimidine phosphoribosyltransferase family. As to quaternary structure, homodimer.

The protein resides in the cytoplasm. It catalyses the reaction AMP + diphosphate = 5-phospho-alpha-D-ribose 1-diphosphate + adenine. The protein operates within purine metabolism; AMP biosynthesis via salvage pathway; AMP from adenine: step 1/1. Catalyzes a salvage reaction resulting in the formation of AMP, that is energically less costly than de novo synthesis. In Pseudomonas syringae pv. syringae (strain B728a), this protein is Adenine phosphoribosyltransferase.